The sequence spans 91 residues: Small ribosomal subunit protein bS20 (91 aa).

Positions 1-23 (MANTPSAKKRAKQAEKRRSHNAS) are disordered. A compositionally biased stretch (basic residues) spans 7–20 (AKKRAKQAEKRRSH).

This sequence belongs to the bacterial ribosomal protein bS20 family.

Binds directly to 16S ribosomal RNA. The protein is Small ribosomal subunit protein bS20 of Pseudomonas aeruginosa (strain LESB58).